We begin with the raw amino-acid sequence, 260 residues long: MPNLLEKTRKITSILQHSVDSLETELPYNTMASRLADIIDCNACIINGGGTLLGYAMKYKTNTDRVEEFFEAKQFPDTYVKAASRVYDTEANLSVENELTIFPVESKDTYPGGLTTIAPIYGGGMRLGSLIIWRNDNEFSDDDLILVEISSTVVGIQLLNLQTENLEDTIRKQTAVNMAINTLSYSEMKAVAAILGELDGNEGRLTASVIADRIGITRSVIVNALRKLESAGIIESRSLGMKGTYLKVINEGIFAKLKEF.

Residues 1 to 159 are GAF domain; it reads MPNLLEKTRK…SSTVVGIQLL (159 aa). Residues 207–226 constitute a DNA-binding region (H-T-H motif); that stretch reads ASVIADRIGITRSVIVNALR.

The protein belongs to the CodY family.

It is found in the cytoplasm. DNA-binding global transcriptional regulator which is involved in the adaptive response to starvation and acts by directly or indirectly controlling the expression of numerous genes in response to nutrient availability. During rapid exponential growth, CodY is highly active and represses genes whose products allow adaptation to nutrient depletion. The chain is Global transcriptional regulator CodY from Streptococcus pyogenes serotype M3 (strain SSI-1).